Reading from the N-terminus, the 156-residue chain is Small ribosomal subunit protein uS7 (156 aa).

This sequence belongs to the universal ribosomal protein uS7 family. Part of the 30S ribosomal subunit. Contacts proteins S9 and S11.

Functionally, one of the primary rRNA binding proteins, it binds directly to 16S rRNA where it nucleates assembly of the head domain of the 30S subunit. Is located at the subunit interface close to the decoding center, probably blocks exit of the E-site tRNA. The protein is Small ribosomal subunit protein uS7 of Photorhabdus laumondii subsp. laumondii (strain DSM 15139 / CIP 105565 / TT01) (Photorhabdus luminescens subsp. laumondii).